The sequence spans 357 residues: DNA integrity scanning protein DisA (357 aa).

Residues Pro8–Asp148 form the DAC domain. The 3',3'-c-di-AMP site is built by Gly76, Leu94, Thr107, Thr111, and Arg128.

This sequence belongs to the DisA family. Homooctamer. Requires Mg(2+) as cofactor.

It carries out the reaction 2 ATP = 3',3'-c-di-AMP + 2 diphosphate. Inhibited by 3'-dATP. Its function is as follows. Participates in a DNA-damage check-point. DisA forms globular foci that rapidly scan along the chromosomes searching for lesions. Has diadenylate cyclase activity, catalyzing the condensation of 2 ATP molecules into cyclic di-AMP (c-di-AMP). c-di-AMP likely acts as a signaling molecule that may couple DNA integrity with a cellular process. This rate-limiting step is the accessibility of the active site; mutating the possible exit tunnel (residues 128-130) increases product 2-fold despite Arg-130 being important for ATP-binding. Does not convert GTP to c-di-GMP. The polypeptide is DNA integrity scanning protein DisA (Thermotoga maritima (strain ATCC 43589 / DSM 3109 / JCM 10099 / NBRC 100826 / MSB8)).